The sequence spans 343 residues: Trans-enoyl reductase ACTTS2 (343 aa).

42–45 contacts NADP(+); sequence GDWK. 128 to 135 provides a ligand contact to substrate; it reads VGITTVGQ. NADP(+) contacts are provided by residues 162-165, 185-188, and Y203; these read STAT and SPHN. Residue 268–272 participates in substrate binding; it reads GYTAL. 333–334 provides a ligand contact to NADP(+); it reads VS.

The protein belongs to the zinc-containing alcohol dehydrogenase family. Monomer.

Its pathway is mycotoxin biosynthesis. In terms of biological role, trans-enoyl reductase; part of the gene clusters that mediate the biosynthesis of the host-selective toxins (HSTs) ACT-toxins responsible for brown spot of tangerine disease by the tangerine pathotype which affects tangerines and mandarins. ACT-toxins consist of three moieties, 9,10-epoxy-8-hydroxy-9-methyl-decatrienoic acid (EDA), valine and a polyketide. ACT-toxin I is toxic to both citrus and pear; toxin II the 5''-deoxy derivative of ACT-toxin I, is highly toxic to pear and slightly toxic to citrus. On cellular level, ACT-toxins affect plasma membrane of susceptible cells and cause a sudden increase in loss of K(+) after a few minutes of toxin treatment. The acyl-CoA ligase ACTT1, the hydrolase ACTT2, the enoyl-CoA hydratases ACTT3 and ACTT6, and the acyl-CoA synthetase ACTT5 are all involved in the biosynthesis of the AK-, AF- and ACT-toxin common 9,10-epoxy-8-hydroxy-9-methyl-decatrienoic acid (EDA) structural moiety. The exact role of each enzyme, and of additional enzymes identified within the AF-toxin clusters have still to be determined. On the other hand, ACTTS1 to ACTTS4 are specific to the tangerine pathotype. The function of ACTTS3 is to elongate the polyketide chain portion of ACT-toxin that is unique to this toxin. The enoyl-reductase ACTTS2 might complement the missing enoyl-reductase (ER) domain in ACTTS3 in the synthesis of the polyketide portion of ACT-toxin. The roles of the nonribosomal peptide synthetases-related proteins ACTTS1 and ACTTS4 have also still not been elucidated. This chain is Trans-enoyl reductase ACTTS2, found in Alternaria alternata (Alternaria rot fungus).